Here is a 738-residue protein sequence, read N- to C-terminus: Catalase-peroxidase (738 aa).

Positions 1 to 16 (MSENHDAIVTDAKTEE) are enriched in basic and acidic residues. Residues 1–37 (MSENHDAIVTDAKTEEAGGCPVAHGRAPHPTQGGGNR) are disordered. The segment at residues 108–231 (WHSAGTYRIS…LGAVQMGLIY (124 aa)) is a cross-link (tryptophyl-tyrosyl-methioninium (Trp-Tyr) (with M-257)). The active-site Proton acceptor is His109. A cross-link (tryptophyl-tyrosyl-methioninium (Tyr-Met) (with W-108)) is located at residues 231–257 (YVNPEGPNGNPDPIAAARDIRETFGRM). His272 contacts heme b.

Belongs to the peroxidase family. Peroxidase/catalase subfamily. Homodimer or homotetramer. It depends on heme b as a cofactor. In terms of processing, formation of the three residue Trp-Tyr-Met cross-link is important for the catalase, but not the peroxidase activity of the enzyme.

It catalyses the reaction H2O2 + AH2 = A + 2 H2O. The enzyme catalyses 2 H2O2 = O2 + 2 H2O. In terms of biological role, bifunctional enzyme with both catalase and broad-spectrum peroxidase activity. The polypeptide is Catalase-peroxidase (Streptomyces ambofaciens).